The chain runs to 418 residues: MLPNTGRLAGCTVFITGASRGIGKAIALKAAKDGANIVIAAKTAQPHPKLLGTIYTAAEEIEAVGGKALPCIVDVRDEQQINAAVEKAIKQFGGIDILVNNASAISLTNTLDTPTKRLDLMMNVNTRGTYLASKACIPYLKKSKVAHILNISPPLNLNPIWFKQHCAYTIAKYGMSMYVLGMAEEFKGEIAVNALWPKTAIHTAAMDMLGGPGIESQCRKVDIIADAAYSIFQKPKSFTGNFVIDESILKEEGIENFDVYAIKPGHPLQPDFFLDEYPEAVSKKMESTGAVPEFKEEKPQPQPKPRSGAVEETFRIVKDSLSDDVVKATQAVYLFELSGEDGGTWFLDLKSKGGNVGYGEPSDQADVVMSMTTDDFVKMFSGKLKPTMAFMSGKLKIKGNMALAIKLEKLMNQMNARL.

NADP(+)-binding positions include 17–23 (GASRGIG), K42, and D74. The residue at position 42 (K42) is an N6-(2-hydroxyisobutyryl)lysine. Position 116 is an N6-acetyllysine (K116). Y168 serves as the catalytic Proton acceptor. K172 serves as a coordination point for NADP(+). Residues 287 to 310 (STGAVPEFKEEKPQPQPKPRSGAV) form a disordered region. In terms of domain architecture, SCP2 spans 306–415 (RSGAVEETFR…KLEKLMNQMN (110 aa)). At K318 the chain carries N6-succinyllysine.

It belongs to the short-chain dehydrogenases/reductases (SDR) family.

The protein resides in the peroxisome. Its subcellular location is the mitochondrion. Its function is as follows. Has apparently no steroid dehydrogenase activity. Controls bile acid (BA) and lipid metabolism in response to nutritional cues. This Pongo abelii (Sumatran orangutan) protein is Hydroxysteroid dehydrogenase-like protein 2 (HSDL2).